A 153-amino-acid polypeptide reads, in one-letter code: Ribosome maturation factor RimP (153 aa).

The protein belongs to the RimP family.

The protein resides in the cytoplasm. Required for maturation of 30S ribosomal subunits. This Clostridium botulinum (strain Langeland / NCTC 10281 / Type F) protein is Ribosome maturation factor RimP.